We begin with the raw amino-acid sequence, 86 residues long: Cell division topological specificity factor (86 aa).

This sequence belongs to the MinE family.

In terms of biological role, prevents the cell division inhibition by proteins MinC and MinD at internal division sites while permitting inhibition at polar sites. This ensures cell division at the proper site by restricting the formation of a division septum at the midpoint of the long axis of the cell. This is Cell division topological specificity factor from Shewanella woodyi (strain ATCC 51908 / MS32).